The following is a 624-amino-acid chain: NADPH-dependent diflavin oxidoreductase 1 (624 aa).

In terms of domain architecture, Flavodoxin-like spans 6 to 168; that stretch reads IVILYGSETG…VYYEFEKRII (163 aa). FMN is bound by residues 12–17, 59–62, 106–115, and Glu142; these read SETGNA, STTG, and LGDSSYPRFN. Residues 226–474 enclose the FAD-binding FR-type domain; it reads ETIRHGTVKK…LQNNHLLHED (249 aa). FAD is bound by residues Arg384, 414–417, and 446–449; these read RFYS and GLCT. NADP(+)-binding positions include 539–540 and 548–552; these read SR and AKYVQ. Trp624 serves as a coordination point for FAD.

Belongs to the NADPH-dependent diflavin oxidoreductase NDOR1 family. This sequence in the N-terminal section; belongs to the flavodoxin family. The protein in the C-terminal section; belongs to the flavoprotein pyridine nucleotide cytochrome reductase family. Interacts with DRE2; as part of the cytosolic iron-sulfur (Fe-S) protein assembly (CIA) machinery. FAD is required as a cofactor. It depends on FMN as a cofactor.

Its subcellular location is the cytoplasm. The protein localises to the mitochondrion. It catalyses the reaction 2 oxidized [2Fe-2S]-[protein] + NADPH = 2 reduced [2Fe-2S]-[protein] + NADP(+) + H(+). Its function is as follows. NADPH-dependent reductase which is a central component of the cytosolic iron-sulfur (Fe-S) protein assembly (CIA) machinery. Transfers electrons from NADPH via its FAD and FMN prosthetic groups to the [2Fe-2S] cluster of DRE2, another key component of the CIA machinery. In turn, this reduced cluster provides electrons for assembly of cytosolic iron-sulfur cluster proteins. Positively controls H(2)O(2)-induced cell death. The protein is NADPH-dependent diflavin oxidoreductase 1 of Kluyveromyces lactis (strain ATCC 8585 / CBS 2359 / DSM 70799 / NBRC 1267 / NRRL Y-1140 / WM37) (Yeast).